The primary structure comprises 260 residues: Cytosolic Fe-S cluster assembly factor Nubp2 homolog (260 aa).

An ATP-binding site is contributed by 14-21 (GKGGVGKS). [4Fe-4S] cluster is bound by residues Cys-188 and Cys-191.

This sequence belongs to the Mrp/NBP35 ATP-binding proteins family. NUBP2/CFD1 subfamily. Heterotetramer of 2 Nubp1 and 2 Nubp2 chains. [4Fe-4S] cluster serves as cofactor.

It is found in the cytoplasm. Functionally, component of the cytosolic iron-sulfur (Fe/S) protein assembly (CIA) machinery. Required for maturation of extramitochondrial Fe-S proteins. The Nubp1-Nubp2 heterotetramer forms a Fe-S scaffold complex, mediating the de novo assembly of an Fe-S cluster and its transfer to target apoproteins. This is Cytosolic Fe-S cluster assembly factor Nubp2 homolog from Drosophila sechellia (Fruit fly).